The primary structure comprises 108 residues: Insulin (108 aa).

Residues 1 to 21 (MAVWLQAGALLVLLVVSSVST) form the signal peptide. 3 disulfides stabilise this stretch: C30–C94, C42–C107, and C93–C98. Positions 54–84 (DVEPLLGFLPPKSAQETEVADFAFKDHAELI) are cleaved as a propeptide — c peptide.

Belongs to the insulin family. In terms of assembly, heterodimer of a B chain and an A chain linked by two disulfide bonds.

The protein resides in the secreted. In terms of biological role, insulin decreases blood glucose concentration. It increases cell permeability to monosaccharides, amino acids and fatty acids. It accelerates glycolysis, the pentose phosphate cycle, and glycogen synthesis in liver. The polypeptide is Insulin (ins) (Danio rerio (Zebrafish)).